A 146-amino-acid polypeptide reads, in one-letter code: Hemoglobin subunit beta-1/2 (146 aa).

Val1 carries the post-translational modification N-acetylvaline. The Globin domain maps to 2–146 (HLTGEEKSGL…VANALAHKYH (145 aa)). At Thr12 the chain carries Phosphothreonine. Residue Lys59 is modified to N6-acetyllysine. Position 63 (His63) interacts with heme b. Lys82 bears the N6-acetyllysine mark. His92 provides a ligand contact to heme b. Cys93 is subject to S-nitrosocysteine. Lys144 carries the N6-acetyllysine modification.

It belongs to the globin family. In terms of assembly, heterotetramer of two alpha chains and two beta chains. In terms of tissue distribution, red blood cells.

Involved in oxygen transport from the lung to the various peripheral tissues. The polypeptide is Hemoglobin subunit beta-1/2 (HBB) (Physeter macrocephalus (Sperm whale)).